We begin with the raw amino-acid sequence, 206 residues long: Large ribosomal subunit protein mL62 (206 aa).

The transit peptide at 1–29 (MATAWCLPWTLRRAGAWLLTPPLRCPRRA) directs the protein to the mitochondrion.

Belongs to the prokaryotic/mitochondrial release factor family. Mitochondrion-specific ribosomal protein mL62 subfamily. Component of the mitochondrial 39S ribosomal subunit.

The protein resides in the mitochondrion. It carries out the reaction an N-acyl-L-alpha-aminoacyl-tRNA + H2O = an N-acyl-L-amino acid + a tRNA + H(+). In terms of biological role, essential peptidyl-tRNA hydrolase component of the mitochondrial large ribosomal subunit. Acts as a codon-independent translation release factor that has lost all stop codon specificity and directs the termination of translation in mitochondrion, possibly in case of abortive elongation. May be involved in the hydrolysis of peptidyl-tRNAs that have been prematurely terminated and thus in the recycling of stalled mitochondrial ribosomes. The polypeptide is Large ribosomal subunit protein mL62 (Ailuropoda melanoleuca (Giant panda)).